Reading from the N-terminus, the 206-residue chain is uncharacterized protein (206 aa).

The MurNAc-LAA domain occupies 32 to 201; sequence VYIDAGHGGE…AADAIVNGID (170 aa).

The protein belongs to the N-acetylmuramoyl-L-alanine amidase 3 family.

This is an uncharacterized protein from Bacillus subtilis (strain 168).